The following is a 299-amino-acid chain: Very long chain fatty acid elongase 5 (299 aa).

An N-acetylmethionine modification is found at Met1. The next 7 helical transmembrane spans lie at 26-46, 64-84, 112-132, 139-158, 168-187, 205-225, and 227-247; these read WFLLDNYIPTFVCSAIYLLIV, ILVVYNLGLTLLSLYMFYELV, VLWWYYFSKLIEFMDTFFFIL, ITVLHVYHHATMLNIWWFVM, FGATLNSFIHVLMYSYYGLS, GQLVQFVLTIIQTSCGVIWPC, and FPLGWLYFQIGYMISLIALFT.

Belongs to the ELO family. ELOVL5 subfamily. In terms of assembly, interacts with TECR. In terms of tissue distribution, highly expressed in lung and brain.

It localises to the endoplasmic reticulum membrane. It is found in the cell projection. The protein resides in the dendrite. It catalyses the reaction a very-long-chain acyl-CoA + malonyl-CoA + H(+) = a very-long-chain 3-oxoacyl-CoA + CO2 + CoA. The enzyme catalyses (6Z,9Z,12Z,15Z)-octadecatetraenoyl-CoA + malonyl-CoA + H(+) = (8Z,11Z,14Z,17Z)-3-oxoicosatetraenoyl-CoA + CO2 + CoA. The catalysed reaction is (6Z,9Z,12Z)-octadecatrienoyl-CoA + malonyl-CoA + H(+) = (8Z,11Z,14Z)-3-oxoeicosatrienoyl-CoA + CO2 + CoA. It carries out the reaction (5Z,8Z,11Z,14Z,17Z)-eicosapentaenoyl-CoA + malonyl-CoA + H(+) = 3-oxo-(7Z,10Z,13Z,16Z,19Z)-docosapentaenoyl-CoA + CO2 + CoA. It catalyses the reaction (5Z,8Z,11Z,14Z)-eicosatetraenoyl-CoA + malonyl-CoA + H(+) = (7Z,10Z,13Z,16Z)-3-oxodocosatetraenoyl-CoA + CO2 + CoA. The enzyme catalyses (9Z,12Z,15Z)-octadecatrienoyl-CoA + malonyl-CoA + H(+) = (11Z,14Z,17Z)-3-oxoeicosatrienoyl-CoA + CO2 + CoA. The catalysed reaction is (9Z)-hexadecenoyl-CoA + malonyl-CoA + H(+) = 3-oxo-(11Z)-octadecenoyl-CoA + CO2 + CoA. It carries out the reaction (9Z)-octadecenoyl-CoA + malonyl-CoA + H(+) = 3-oxo-(11Z)-eicosenoyl-CoA + CO2 + CoA. It catalyses the reaction (11Z)-octadecenoyl-CoA + malonyl-CoA + H(+) = 3-oxo-(13Z)-eicosenoyl-CoA + CO2 + CoA. The enzyme catalyses (9Z,12Z)-octadecadienoyl-CoA + malonyl-CoA + H(+) = (11Z,14Z)-3-oxoicosa-11,14-dienoyl-CoA + CO2 + CoA. The protein operates within lipid metabolism; polyunsaturated fatty acid biosynthesis. Functionally, catalyzes the first and rate-limiting reaction of the four reactions that constitute the long-chain fatty acids elongation cycle. This endoplasmic reticulum-bound enzymatic process allows the addition of 2 carbons to the chain of long- and very long-chain fatty acids (VLCFAs) per cycle. Condensing enzyme that acts specifically toward polyunsaturated acyl-CoA with the higher activity toward C18:3(n-6) acyl-CoA. May participate in the production of monounsaturated and of polyunsaturated VLCFAs of different chain lengths that are involved in multiple biological processes as precursors of membrane lipids and lipid mediators. In conditions where the essential linoleic and alpha linoleic fatty acids are lacking it is also involved in the synthesis of Mead acid from oleic acid. The chain is Very long chain fatty acid elongase 5 from Rattus norvegicus (Rat).